Reading from the N-terminus, the 732-residue chain is MPPPSDIVKVAIEWPGANAQLLEIDQKRPLASIIKEVCDGWSLPNPEYYTLRYADGPQLYVTEQTRNDIKNGTILQLAVSPSRAARQLMERTQSSSMETRLDAMKELAKLSADVTFATEFINMDGIIVLTRLVESGTKLLSHYSEMLAFTLTAFLELMDHGIVSWDMVSVTFIKQIAGYVSQPMVDVSILQRSLAILESMVLNSQSLYQKIAEEITVGQLISHLQVSNQEIQTYAIALINALFLKAPEDKRQDKHLNPLDLPVTDMANAFAQKHLRSIILNHVIRGNRPIKTEMAHQLYVLQVLTFNLLEERMMTKMDPNDQAQRDIIFELRRIAFDAESDPSNVPGSGTEKRKAMYTKDYKMLGFTNHINPALDFTQTPPGMLALDNMLYLAKVHQDTYIRIVLENSSREDKHECPFGRSAIELTKMLCEILQVGELPNEGRNDYHPMFFTHDRAFEELFGICIQLLNKTWKEMRATAEDFNKVMQVVREQITRALPSKPNSLDQFKSKLRSLSYSEILRLRQSERMSQDDFQSPPIVELREKIQPEILELIKQQRLNRLCEGSSFRKIGNRRRQERFWHCRLALNHKVLHYGDLDDNPQGEVTFESLQEKIPVADIKAIVTGKDCPHMKEKSALKQNKEVLELAFSILYDPDETLNFIAPNKYEYCIWIDGLSALLGKDMSSELTKSDLDTLLSMEMKLRLLDLENIQIPEAPPPVPKEPSSYDFVYHYG.

Tyr48 is modified (phosphotyrosine). The region spanning 323–497 (AQRDIIFELR…VVREQITRAL (175 aa)) is the ELMO domain. Ser515 carries the post-translational modification Phosphoserine. A PH domain is found at 565 to 686 (SSFRKIGNRR…LLGKDMSSEL (122 aa)). The SH3-binding signature appears at 712 to 719 (PEAPPPVP). Tyr729 carries the post-translational modification Phosphotyrosine.

As to quaternary structure, interacts directly with the SH3-domain of DOCK1 via its SH3-binding site. Probably forms a heterotrimeric complex with DOCK1 and RAC1. Interacts with ARHGEF16, DOCK4 and EPHA2; mediates activation of RAC1 by EPHA2. Interacts with ADGRB3. Interacts with AUTS2; the interaction is direct.

The protein localises to the cytoplasm. Its subcellular location is the cytosol. It is found in the membrane. In terms of biological role, involved in cytoskeletal rearrangements required for phagocytosis of apoptotic cells and cell motility. Acts in association with DOCK1 and CRK. Was initially proposed to be required in complex with DOCK1 to activate Rac Rho small GTPases. May enhance the guanine nucleotide exchange factor (GEF) activity of DOCK1. The chain is Engulfment and cell motility protein 2 (Elmo2) from Mus musculus (Mouse).